The chain runs to 423 residues: MAAAVAASSSSSSSSCAAVGVATASHPHRHRQARFVVSPPAPASPAALLWRRPRRVAPTTFCSAPSLGRVGWPRREGAAWLLSFRAGPVSSPSSAAAGDPSQALSALLPLVVAATAVAALGNPATFSWVSKEYYAPALGGIMLSIGIKLSIDDFALAFKRPVPLTIGYMAQYIVKPLMGVLIARAFGMPSAFFAGFVLTCCVSGAQLSSYASFLSKGDVALSILLTSCSTISSVVVTPVLTGLLIGSVVPVDGIAMAKSILQVVLVPVTLGLLLNTYAKAVVNVIQPVMPFVAMLCTSLCIGSPLAINRSKILSSEGFLLLLPIVTFHIAAFIVGYWISKLPMLRQEEPVCRTISVCTGMQSSTLAGLLATQFLGSSQAVPAACSVVIMAIFGLTLASYWGNGLRIRDIGSRFVPQASAGVSS.

Residues 1–45 constitute a chloroplast transit peptide; that stretch reads MAAAVAASSSSSSSSCAAVGVATASHPHRHRQARFVVSPPAPASP. A run of 9 helical transmembrane segments spans residues 106–126, 138–158, 165–187, 192–214, 231–251, 254–274, 287–307, 318–338, and 380–400; these read ALLPLVVAATAVAALGNPATF, LGGIMLSIGIKLSIDDFALAF, TIGYMAQYIVKPLMGVLIARAFG, FFAGFVLTCCVSGAQLSSYASFL, ISSVVVTPVLTGLLIGSVVPV, IAMAKSILQVVLVPVTLGLLL, PVMPFVAMLCTSLCIGSPLAI, FLLLLPIVTFHIAAFIVGYWI, and VPAACSVVIMAIFGLTLASYW.

It belongs to the bile acid:sodium symporter (BASS) (TC 2.A.28) family.

The protein localises to the membrane. The protein resides in the plastid. It is found in the chloroplast envelope. Functionally, may function as sodium-coupled metabolite transporter across the chloroplast envelope. This is Probable sodium/metabolite cotransporter BASS3, chloroplastic (BASS3) from Oryza sativa subsp. japonica (Rice).